A 102-amino-acid polypeptide reads, in one-letter code: Cytochrome c (102 aa).

An N-acetylglycine modification is found at Gly1. Residues 1–11 (GDAERGKKLFE) are compositionally biased toward basic and acidic residues. Positions 1–26 (GDAERGKKLFESRAGQCHSSQKGVNS) are disordered. Heme c-binding residues include Cys17, His18, and Met79. Residues 17–26 (CHSSQKGVNS) are compositionally biased toward polar residues. The residue at position 85 (Lys85) is an N6,N6,N6-trimethyllysine.

The protein belongs to the cytochrome c family. In terms of processing, binds 1 heme c group covalently per subunit.

The protein localises to the mitochondrion intermembrane space. Electron carrier protein. The oxidized form of the cytochrome c heme group can accept an electron from the heme group of the cytochrome c1 subunit of cytochrome reductase. Cytochrome c then transfers this electron to the cytochrome oxidase complex, the final protein carrier in the mitochondrial electron-transport chain. In Euglena viridis (Cercaria viridis), this protein is Cytochrome c.